A 104-amino-acid polypeptide reads, in one-letter code: Large ribosomal subunit protein uL24 (104 aa).

Belongs to the universal ribosomal protein uL24 family. In terms of assembly, part of the 50S ribosomal subunit.

Its function is as follows. One of two assembly initiator proteins, it binds directly to the 5'-end of the 23S rRNA, where it nucleates assembly of the 50S subunit. Functionally, one of the proteins that surrounds the polypeptide exit tunnel on the outside of the subunit. This is Large ribosomal subunit protein uL24 from Pseudoalteromonas atlantica (strain T6c / ATCC BAA-1087).